A 287-amino-acid chain; its full sequence is Nucleotide-binding protein Sfri_3380 (287 aa).

Residue 8-15 (GRSGSGKS) coordinates ATP. A GTP-binding site is contributed by 56-59 (DVRN).

This sequence belongs to the RapZ-like family.

In terms of biological role, displays ATPase and GTPase activities. In Shewanella frigidimarina (strain NCIMB 400), this protein is Nucleotide-binding protein Sfri_3380.